Here is a 252-residue protein sequence, read N- to C-terminus: Probable transcriptional regulatory protein Haur_3030 (252 aa).

Belongs to the TACO1 family.

It is found in the cytoplasm. The polypeptide is Probable transcriptional regulatory protein Haur_3030 (Herpetosiphon aurantiacus (strain ATCC 23779 / DSM 785 / 114-95)).